A 450-amino-acid chain; its full sequence is tRNA modification GTPase MnmE (450 aa).

3 residues coordinate (6S)-5-formyl-5,6,7,8-tetrahydrofolate: Arg23, Glu80, and Arg123. One can recognise a TrmE-type G domain in the interval Gly219–Gly372. Residue Asn229 participates in K(+) binding. Residues Asn229–Ser234, Thr248–Thr254, Asp273–Gly276, and Ser353–Arg355 each bind GTP. Ser233 is a Mg(2+) binding site. Residues Thr248, Ile250, and Thr253 each coordinate K(+). Residue Thr254 coordinates Mg(2+). Lys450 provides a ligand contact to (6S)-5-formyl-5,6,7,8-tetrahydrofolate.

This sequence belongs to the TRAFAC class TrmE-Era-EngA-EngB-Septin-like GTPase superfamily. TrmE GTPase family. Homodimer. Heterotetramer of two MnmE and two MnmG subunits. K(+) is required as a cofactor.

Its subcellular location is the cytoplasm. Functionally, exhibits a very high intrinsic GTPase hydrolysis rate. Involved in the addition of a carboxymethylaminomethyl (cmnm) group at the wobble position (U34) of certain tRNAs, forming tRNA-cmnm(5)s(2)U34. This is tRNA modification GTPase MnmE from Bordetella bronchiseptica (strain ATCC BAA-588 / NCTC 13252 / RB50) (Alcaligenes bronchisepticus).